The chain runs to 208 residues: MQAQTLEVTMRPEVGKQAARRLRRQGKLPGIIYGKKIANLAVIIPARQLEHILATEGENALLKLVVSGDGQNKEFTAVIREVQRHPLKGNLTHVDFYQVSMEDKLRATVPVILEGEARGVKEGGILQHGVREIEIESLPADLPESIVVDVSHLGVGEHLTVGEIKVPAGVKILSEPDTVIATVVTTRAVETETEEETTTGESPAQPAE.

The interval alanine 188–glutamate 208 is disordered.

Belongs to the bacterial ribosomal protein bL25 family. CTC subfamily. As to quaternary structure, part of the 50S ribosomal subunit; part of the 5S rRNA/L5/L18/L25 subcomplex. Contacts the 5S rRNA. Binds to the 5S rRNA independently of L5 and L18.

Functionally, this is one of the proteins that binds to the 5S RNA in the ribosome where it forms part of the central protuberance. The chain is Large ribosomal subunit protein bL25 from Moorella thermoacetica (strain ATCC 39073 / JCM 9320).